The sequence spans 413 residues: 1-deoxy-D-xylulose 5-phosphate reductoisomerase (413 aa).

8 residues coordinate NADPH: T28, G29, S30, I31, G54, R55, N56, and N142. Residue K143 coordinates 1-deoxy-D-xylulose 5-phosphate. E144 serves as a coordination point for NADPH. D168 is a Mn(2+) binding site. 1-deoxy-D-xylulose 5-phosphate-binding residues include S169, E170, S194, and H217. A Mn(2+)-binding site is contributed by E170. Residue G223 participates in NADPH binding. 1-deoxy-D-xylulose 5-phosphate contacts are provided by S230, N235, K236, and E239. Position 239 (E239) interacts with Mn(2+).

It belongs to the DXR family. Mg(2+) serves as cofactor. The cofactor is Mn(2+).

It carries out the reaction 2-C-methyl-D-erythritol 4-phosphate + NADP(+) = 1-deoxy-D-xylulose 5-phosphate + NADPH + H(+). The protein operates within isoprenoid biosynthesis; isopentenyl diphosphate biosynthesis via DXP pathway; isopentenyl diphosphate from 1-deoxy-D-xylulose 5-phosphate: step 1/6. In terms of biological role, catalyzes the NADPH-dependent rearrangement and reduction of 1-deoxy-D-xylulose-5-phosphate (DXP) to 2-C-methyl-D-erythritol 4-phosphate (MEP). The protein is 1-deoxy-D-xylulose 5-phosphate reductoisomerase of Thermosynechococcus vestitus (strain NIES-2133 / IAM M-273 / BP-1).